Consider the following 149-residue polypeptide: Large ribosomal subunit protein uL15 (149 aa).

The segment covering 1–11 (MSDPIKLHDLR) has biased composition (basic and acidic residues). The tract at residues 1 to 44 (MSDPIKLHDLRPAPGAKKAKTRVGRGEASKGKTAGRGTKGTKAR) is disordered.

The protein belongs to the universal ribosomal protein uL15 family. As to quaternary structure, part of the 50S ribosomal subunit.

In terms of biological role, binds to the 23S rRNA. This chain is Large ribosomal subunit protein uL15, found in Corynebacterium jeikeium (strain K411).